The sequence spans 335 residues: Phosphatidylglycerol--prolipoprotein diacylglyceryl transferase (335 aa).

The next 3 membrane-spanning stretches (helical) occupy residues 31–51, 67–87, and 100–120; these read IYWYGIIFVCGFLIAILTYSL, YIFLAIPMTIIGARLWSLAIG, and LAIQGGVIAGVLSAAVYFPLI. Arginine 163 lines the a 1,2-diacyl-sn-glycero-3-phospho-(1'-sn-glycerol) pocket. 3 helical membrane passes run 213–233, 235–255, and 277–297; these read PLFLYESFFNVIVFVFIYFGL, YIKQLKIGFISMSYFFFYGVT, and SLLLIFGVLGALYVQFIAPLL.

This sequence belongs to the Lgt family.

Its subcellular location is the cell membrane. It carries out the reaction L-cysteinyl-[prolipoprotein] + a 1,2-diacyl-sn-glycero-3-phospho-(1'-sn-glycerol) = an S-1,2-diacyl-sn-glyceryl-L-cysteinyl-[prolipoprotein] + sn-glycerol 1-phosphate + H(+). The protein operates within protein modification; lipoprotein biosynthesis (diacylglyceryl transfer). In terms of biological role, catalyzes the transfer of the diacylglyceryl group from phosphatidylglycerol to the sulfhydryl group of the N-terminal cysteine of a prolipoprotein, the first step in the formation of mature lipoproteins. The polypeptide is Phosphatidylglycerol--prolipoprotein diacylglyceryl transferase (Ureaplasma parvum serovar 3 (strain ATCC 27815 / 27 / NCTC 11736)).